A 189-amino-acid polypeptide reads, in one-letter code: dCTP deaminase, dUMP-forming (189 aa).

DCTP is bound by residues 101-106 (KSSLGR), aspartate 119, 127-129 (TLE), glutamine 148, tyrosine 162, lysine 170, and glutamine 174. Glutamate 129 acts as the Proton donor/acceptor in catalysis. The segment at 163–189 (GSGKLGSKYQGQRGPTPSKAYLNFPNK) is disordered.

The protein belongs to the dCTP deaminase family. As to quaternary structure, homotrimer.

The enzyme catalyses dCTP + 2 H2O = dUMP + NH4(+) + diphosphate. It functions in the pathway pyrimidine metabolism; dUMP biosynthesis; dUMP from dCTP: step 1/1. Functionally, bifunctional enzyme that catalyzes both the deamination of dCTP to dUTP and the hydrolysis of dUTP to dUMP without releasing the toxic dUTP intermediate. The protein is dCTP deaminase, dUMP-forming of Corynebacterium glutamicum (strain R).